The sequence spans 377 residues: Cytochrome b (377 aa).

4 helical membrane-spanning segments follow: residues 36-56 (WGSL…FLAM), 80-102 (WLIR…LHMA), 115-135 (VWLI…MGYI), and 181-201 (FFVL…IHLI). Residues His-86 and His-100 each coordinate heme b. Residues His-185 and His-199 each coordinate heme b. His-204 contacts a ubiquinone. 4 consecutive transmembrane segments (helical) span residues 227 to 247 (YSSK…VIIF), 291 to 311 (LGGV…PFIS), 326 to 346 (LFWS…MPVV), and 354 to 374 (LTST…FLMI).

It belongs to the cytochrome b family. In terms of assembly, the main subunits of complex b-c1 are: cytochrome b, cytochrome c1 and the Rieske protein. Heme b serves as cofactor.

It is found in the mitochondrion inner membrane. Component of the ubiquinol-cytochrome c reductase complex (complex III or cytochrome b-c1 complex) that is part of the mitochondrial respiratory chain. The b-c1 complex mediates electron transfer from ubiquinol to cytochrome c. Contributes to the generation of a proton gradient across the mitochondrial membrane that is then used for ATP synthesis. The protein is Cytochrome b (mt:Cyt-b) of Myzostoma seymourcollegiorum (Polychaete worm).